Here is a 93-residue protein sequence, read N- to C-terminus: Islet amyloid polypeptide (93 aa).

A signal peptide spans 1–23 (MMCISKLPAVLLILSVALNHLRA). The propeptide occupies 24–35 (TPVRSGSNPQMD). The cysteines at positions 39 and 44 are disulfide-linked. A disordered region spans residues 64–93 (LPPTNVGSNTYGKRNAAGDPNRESLDFLLV). Residue tyrosine 74 is modified to Tyrosine amide. A propeptide spanning residues 78–93 (NAAGDPNRESLDFLLV) is cleaved from the precursor. The span at 83–93 (PNRESLDFLLV) shows a compositional bias: basic and acidic residues.

The protein belongs to the calcitonin family. As to quaternary structure, can form homodimers. Interacts with IDE and INS. Interaction with INS inhibits homodimerization and fibril formation.

Its subcellular location is the secreted. Its function is as follows. Amylin/IAPP is a glucoregulatory peptide hormone that plays an important role in the regulation of energy homeostasis. Selectively inhibits insulin-stimulated glucose utilization and glycogen deposition in muscle, while not affecting adipocyte glucose metabolism. IAPP function is mediated by the CALCR-RAMPs (AMYRs) receptor complexes. Amylin can also bind CALCR receptor in the absence of RAMPs, although it is more selective for AMYRs. This chain is Islet amyloid polypeptide, found in Mus musculus (Mouse).